We begin with the raw amino-acid sequence, 219 residues long: Translation initiation factor IF-3 (219 aa).

This sequence belongs to the IF-3 family. In terms of assembly, monomer.

The protein localises to the cytoplasm. Its function is as follows. IF-3 binds to the 30S ribosomal subunit and shifts the equilibrium between 70S ribosomes and their 50S and 30S subunits in favor of the free subunits, thus enhancing the availability of 30S subunits on which protein synthesis initiation begins. The sequence is that of Translation initiation factor IF-3 from Prochlorococcus marinus (strain MIT 9313).